We begin with the raw amino-acid sequence, 84 residues long: Acetylcholine receptor subunit alpha (84 aa).

2 cysteine pairs are disulfide-bonded: cysteine 7-cysteine 21 and cysteine 71-cysteine 72. N-linked (GlcNAc...) asparagine glycosylation occurs at asparagine 20.

Belongs to the ligand-gated ion channel (TC 1.A.9) family. Acetylcholine receptor (TC 1.A.9.1) subfamily. Alpha-1/CHRNA1 sub-subfamily. As to quaternary structure, one of the alpha chains that assemble within the acetylcholine receptor, a pentamer of two alpha chains, a beta, a delta, and a gamma (in immature muscle) or epsilon (in mature muscle) chains. The muscle heteropentamer composed of alpha-1, beta-1, delta, epsilon subunits interacts with the alpha-conotoxin ImII.

Its subcellular location is the postsynaptic cell membrane. The protein resides in the cell membrane. The catalysed reaction is K(+)(in) = K(+)(out). The enzyme catalyses Na(+)(in) = Na(+)(out). Upon acetylcholine binding, the AChR responds by an extensive change in conformation that affects all subunits and leads to opening of an ion-conducting channel across the plasma membrane. This Crocidura russula (Greater white-toothed shrew) protein is Acetylcholine receptor subunit alpha (CHRNA1).